The primary structure comprises 309 residues: uncharacterized protein (309 aa).

Residues 1 to 16 show a composition bias toward basic residues; the sequence is MAGNSRRRGAVRKAGT. The segment at 1–70 is disordered; sequence MAGNSRRRGA…AKRTEETETV (70 aa). S-adenosyl-L-methionine is bound by residues Gly261, Ile281, and Leu290.

It belongs to the class IV-like SAM-binding methyltransferase superfamily. RNA methyltransferase TrmH family.

This is an uncharacterized protein from Mycolicibacterium paratuberculosis (strain ATCC BAA-968 / K-10) (Mycobacterium paratuberculosis).